A 262-amino-acid chain; its full sequence is 5'-nucleotidase SurE (262 aa).

4 residues coordinate a divalent metal cation: aspartate 8, aspartate 9, serine 41, and asparagine 97.

Belongs to the SurE nucleotidase family. The cofactor is a divalent metal cation.

The protein localises to the cytoplasm. The enzyme catalyses a ribonucleoside 5'-phosphate + H2O = a ribonucleoside + phosphate. Its function is as follows. Nucleotidase that shows phosphatase activity on nucleoside 5'-monophosphates. This is 5'-nucleotidase SurE from Methanococcus maripaludis (strain DSM 14266 / JCM 13030 / NBRC 101832 / S2 / LL).